The sequence spans 123 residues: Protein lgg-1 (123 aa).

Residue Gly-116 is the site of Phosphatidylethanolamine amidated glycine attachment. Residues 117–123 constitute a propeptide, removed in mature form; the sequence is GEVEKKE.

This sequence belongs to the ATG8 family. As to quaternary structure, interacts with sepa-1 (via the LIR motifs); the interaction is direct. Interacts with allo-1 (via the LIR motif). Interacts with sqst-1 (via the LIR motifs); the interaction is direct. Both lipidated and unlipidated forms interact with epg-7 (via the LIR motif); the interaction is direct. Interacts with epg-2 (via the LIR motifs); the interaction is direct. Interacts with atg-13; the interaction is direct. Interacts with unc-51 (via the LIR motif); the interaction is direct. Interacts with atg-7; the interaction is direct. Interacts with atg-3. The interaction with atg-7 and atg-3 may be required for the lipidation of lgg-1. Cleaved by atg-4.1 and/or atg-4.2, after Gly-116 to form a thioester bond with 'Cys-523' of atg-7 (E1-like activating enzyme) before being transferred to 'Cys-255' of atg-3 (E2 conjugating enzyme), in order to be amidated with phosphatidylethanolamine. This lipid modification anchors lgg-1 to membranes and can be reversed by atg-4.2, releasing soluble lgg-1. C-terminal cleavage is essential for autophagosome initiation and biogenesis. Lipidation is not essential for autophagy or development but the lipidated form is involved in cargo recognition and autophagosome biogenesis. Lipidation regulates lgg-2-positive autophagosome formation. Expressed in PLML touch receptor neuron and in the ventral nerve cord. Expressed in AIY interneurons.

The protein resides in the preautophagosomal structure. It is found in the cytoplasmic vesicle. It localises to the autophagosome. The protein localises to the autophagosome membrane. Its subcellular location is the lysosome lumen. The protein resides in the mitochondrion. It is found in the cytoplasm. It localises to the phagosome membrane. The protein localises to the cell membrane. Its subcellular location is the cell projection. The protein resides in the dendrite. It is found in the perikaryon. Ubiquitin-like modifier involved in the formation of autophagosomal vacuoles (autophagosomes). When lipidated mediates tethering between adjacent membranes and stimulates membrane fusion during autophagy. Recruits lipidated-lgg-2 to maturing autophagosomes. Acts in the aggrephagy pathway, which is the macroautophagic degradation of ubiquitinated protein aggregates, and preferentially interacts with autophagy proteins and substrates containing LIR motifs to mediate autophagosome formation and protein aggregate degradation. In particular, binds to components of the unc-51-atg-13 complex to regulate autophagosome formation and cargo sequestration. Required for the degradation of specific sepa-1- and sqst-1-containing protein aggregates during embryogenesis. Involved in allophagy, which is an autophagic process in which paternal mitochondria and organelles are degraded during fertilization, and moreover is required for the formation of lgg-2-positive allophagic autophagosomes in embryos. Involved in the clearance of apoptotic cells by promoting the delivery of engulfed apoptotic cells to the lysosome. Plays a role in the distribution and clearance of germ cell specific P-granules from somatic cells. Also plays a role in the autophagy-mediated degradation of ribosomal RNA and ribosomal proteins in lysosomes. Involved in xenophagy, the autophagy-mediated degradation of pathogens and pathogen products, such as toxins. Required for normal survival when exposed to pathogenic bacteria S.typhimurium probably by promoting autophagic degradation of intracellular S.typhimurium. Also plays a role in membrane-pore repair. Plays a role in mitophagy. Essential for dauer development and longevity, including longevity in response to moderate, short-term heat shock, also known as a hormetic heat shock. The sequence is that of Protein lgg-1 from Caenorhabditis elegans.